The chain runs to 330 residues: MNFIDEVKIYIKGGNGGNGCVSFHREKFIDRGGPDGGDGGRGGSVIFRSNHHLNTLVNYRYKQHFTAENGENGKGSNRSGKSGKSLVLDVPIGTQIFSEDGNILLHDFTEDDQSFEIIKGGSGGLGNSHFKTSVNQAPRKRTEGEIAEEMWIHLSLKLLSDVGLVGLPNAGKSTFLSVVTAAKPKIADYPFTTLVPHLGVVYVDDEEFVIADIPGLIEGAHQGHGLGDKFLKHIERCNVLIHLIDGSSNDVVVDYNTVRLELGSYSDHLEHKIEIICLNKCDVLTDEEIQEKINKLQQATNKEVFSISTYTNLGVNKIVKLALKIIKNQE.

In terms of domain architecture, Obg spans 1–159 (MNFIDEVKIY…MWIHLSLKLL (159 aa)). An OBG-type G domain is found at 160-327 (SDVGLVGLPN…IVKLALKIIK (168 aa)). Residues 166–173 (GLPNAGKS), 191–195 (FTTLV), 212–215 (DIPG), 279–282 (NKCD), and 308–310 (STY) contribute to the GTP site. Mg(2+) contacts are provided by serine 173 and threonine 193.

This sequence belongs to the TRAFAC class OBG-HflX-like GTPase superfamily. OBG GTPase family. Monomer. Requires Mg(2+) as cofactor.

It localises to the cytoplasm. In terms of biological role, an essential GTPase which binds GTP, GDP and possibly (p)ppGpp with moderate affinity, with high nucleotide exchange rates and a fairly low GTP hydrolysis rate. Plays a role in control of the cell cycle, stress response, ribosome biogenesis and in those bacteria that undergo differentiation, in morphogenesis control. The polypeptide is GTPase Obg (Rickettsia akari (strain Hartford)).